The chain runs to 309 residues: MSDVLISEFMDEAAVADLERDCSVTFDATLVDDRARLLSSGAGVRALIVRNRTRVDRELLARFPDLRAVGRLGVGLDNIDVDACRESDIAVLPATGGNTVSVAEYVLTGIFMLRRGAYLSTPRVLAGEWPRQALMGHETQGATLGLVGFGGIARDLARRAQCLGMQVMAHDPFVPADDAAWQTVERAERLATLLEKADAVSLHVPLSEGTRHLIDGEALATMKPGSLLINTARGGIVDERALAASLRDRHLGGAMLDVFEEEPLTADSVLSGVEGLIATPHIAGVTHESNERISWITVDNVRRALGVRA.

NAD(+) is bound by residues 151 to 152 (GI), D171, 231 to 233 (TAR), and D257. R233 is an active-site residue. Residue E262 is part of the active site. H281 acts as the Proton donor in catalysis. NAD(+) is bound at residue 281–284 (HIAG).

It belongs to the D-isomer specific 2-hydroxyacid dehydrogenase family.

The enzyme catalyses (2S)-3-sulfolactate + NAD(+) = 3-sulfopyruvate + NADH + H(+). Functionally, dehydrogenase of the (R,S)-sulfolactate degradation pathway that only acts on the (S)-enantiomer of 3-sulfolactate. Together with ComC, provides a racemase system that converts (2S)-3-sulfolactate to (2R)-3-sulfolactate, which is degraded further by (2R)-sulfolactate sulfo-lyase. Specific for NAD. Also able to form sulfolactate from sulfopyruvate. The polypeptide is (S)-sulfolactate dehydrogenase (slcC) (Chromohalobacter salexigens (strain ATCC BAA-138 / DSM 3043 / CIP 106854 / NCIMB 13768 / 1H11)).